The sequence spans 256 residues: Photosystem I chlorophyll a/b-binding protein 5, chloroplastic (256 aa).

The transit peptide at 1–32 directs the protein to the chloroplast; it reads MAVVLRGGITGGFLHHRRDASSVITRRISSVK. Residue Ala33 is modified to N-acetylalanine. Trp49 is a chlorophyll b binding site. Positions 69 and 88 each coordinate chlorophyll a. Position 93 (Arg93) interacts with chlorophyll b. 2 helical membrane passes run 94-113 and 129-146; these read FAML…TTGI and FAST…MGFA. Residues Glu147 and Arg150 each contribute to the chlorophyll b site. Residues Lys205, Glu206, Asn209, Arg211, Gln223, and His238 each coordinate chlorophyll a. A helical membrane pass occupies residues 212-232; that stretch reads LAMMAMLGFFVQASVTHTGPI.

Belongs to the light-harvesting chlorophyll a/b-binding (LHC) protein family. As to quaternary structure, the LHC complex consists of chlorophyll a-b binding proteins. Homodimer. Heterodimer with LHCA2 and, possibly, LHCA3. Can substitute to LHCA4 to form a complex with LHCA1. Binds pigments. Element of the NAD(P)H dehydrogenase-photosystem I supercomplex (NDH-PSI). The cofactor is Binds at least 14 chlorophylls (8 Chl-a and 6 Chl-b) and carotenoids such as lutein and neoxanthin.. Post-translationally, photoregulated by reversible phosphorylation of its threonine residues.

The protein resides in the plastid. The protein localises to the chloroplast thylakoid membrane. The light-harvesting complex (LHC) functions as a light receptor, it captures and delivers excitation energy to photosystems with which it is closely associated. Seems involved in the function of the photosystem I in low light conditions, when other LHCA proteins are less abundant. Required, together with LHCA6, for the formation of a full-size NAD(P)H dehydrogenase-photosystem I supercomplex (NDH-PSI) that triggers cyclic and chlororespiratory electron transport in chloroplast thylakoids, especially under stress conditions (e.g. increased light intensity). In Arabidopsis thaliana (Mouse-ear cress), this protein is Photosystem I chlorophyll a/b-binding protein 5, chloroplastic.